Consider the following 299-residue polypeptide: Fibrinogen silencer-binding protein (299 aa).

Residue Lys-94 forms a Glycyl lysine isopeptide (Lys-Gly) (interchain with G-Cter in SUMO2) linkage.

Interacts with APBA1 (via PDZ 1 and 2 domains). In terms of tissue distribution, expressed in multiple tissues including brain.

The protein localises to the nucleus. Its function is as follows. Transcriptional repressor that down-regulates the expression of the fibrinogen gamma chain. Represses transcription of GSK3B gene promoter via its interaction with APBA1. The chain is Fibrinogen silencer-binding protein (FSBP) from Homo sapiens (Human).